Consider the following 207-residue polypeptide: Recombination protein RecR (207 aa).

The segment at 60-75 (CRRCHNISDSGVCTIC) adopts a C4-type zinc-finger fold. A Toprim domain is found at 83–178 (STLCVVENIR…RVSVIARGIA (96 aa)).

This sequence belongs to the RecR family.

Its function is as follows. May play a role in DNA repair. It seems to be involved in an RecBC-independent recombinational process of DNA repair. It may act with RecF and RecO. The protein is Recombination protein RecR of Porphyromonas gingivalis (strain ATCC 33277 / DSM 20709 / CIP 103683 / JCM 12257 / NCTC 11834 / 2561).